Here is a 226-residue protein sequence, read N- to C-terminus: MVSAIVLAGGRGKRMGNIQSKQYIDLNGAPILYYTLKQFIENDLIDKIILVVPEDEKDYCKREVLNKYGLKIDDLVSGGNERQESVYNALEKLEKSDIVLIHDGARPFVSQKIINYAVEYAKRYKAAAPGVMPKDTIKIKDSNNFSVDTLVRSELVAIQTPQAFDFNLIYECHKEIKKRCISVTDDTSVVELLGHKVYIYEGDYKNIKITTPEDLILAEYFVKNIV.

Belongs to the IspD/TarI cytidylyltransferase family. IspD subfamily.

It catalyses the reaction 2-C-methyl-D-erythritol 4-phosphate + CTP + H(+) = 4-CDP-2-C-methyl-D-erythritol + diphosphate. The protein operates within isoprenoid biosynthesis; isopentenyl diphosphate biosynthesis via DXP pathway; isopentenyl diphosphate from 1-deoxy-D-xylulose 5-phosphate: step 2/6. Functionally, catalyzes the formation of 4-diphosphocytidyl-2-C-methyl-D-erythritol from CTP and 2-C-methyl-D-erythritol 4-phosphate (MEP). The sequence is that of 2-C-methyl-D-erythritol 4-phosphate cytidylyltransferase from Clostridium beijerinckii (strain ATCC 51743 / NCIMB 8052) (Clostridium acetobutylicum).